Here is a 127-residue protein sequence, read N- to C-terminus: Large ribosomal subunit protein bL17 (127 aa).

It belongs to the bacterial ribosomal protein bL17 family. As to quaternary structure, part of the 50S ribosomal subunit. Contacts protein L32.

This is Large ribosomal subunit protein bL17 from Legionella pneumophila (strain Paris).